Consider the following 255-residue polypeptide: Pre-miRNA 5'-monophosphate methyltransferase (255 aa).

S-adenosyl-L-methionine is bound by residues Arg32, Asn66, Asp96, Asp121–Ile122, and Met150. One can recognise a Bin3-type SAM domain in the interval Leu41–His253.

This sequence belongs to the methyltransferase superfamily.

It localises to the cytoplasm. It catalyses the reaction a 5'-end 5'-phospho-ribonucleoside-RNA + S-adenosyl-L-methionine = a 5'-end (5'-methylphospho)-ribonucleoside-RNA + S-adenosyl-L-homocysteine. The catalysed reaction is a 5'-end 5'-phospho-ribonucleoside-RNA + 2 S-adenosyl-L-methionine = a 5'-end (5'-bismethylphospho)-ribonucleoside-RNA + 2 S-adenosyl-L-homocysteine. In terms of biological role, O-methyltransferase that specifically monomethylates 5'-monophosphate of cytoplasmic histidyl tRNA (tRNA(His)), acting as a capping enzyme by protecting tRNA(His) from cleavage by DICER1. Also able, with less efficiently, to methylate the 5' monophosphate of a subset of pre-miRNAs, acting as a negative regulator of miRNA processing. The 5' monophosphate of pre-miRNAs is recognized by DICER1 and is required for pre-miRNAs processing: methylation at this position reduces the processing of pre-miRNAs by DICER1. Was also reported to mediate dimethylation of pre-miR-145; however dimethylation cannot be reproduced by another group which observes a monomethylation of pre-miR-145. This is Pre-miRNA 5'-monophosphate methyltransferase (bcdin3d) from Xenopus laevis (African clawed frog).